A 192-amino-acid chain; its full sequence is ADP-ribosylation factor-like protein 14 (192 aa).

Glycine 2 is lipidated: N-myristoyl glycine. GTP-binding positions include 20-27 (GLDSAGKS), 64-68 (DVGGQ), and 123-126 (NKQD).

This sequence belongs to the small GTPase superfamily. Arf family. Interacts with ARL14EP. Expressed in immature dendritic cells.

It is found in the cytoplasmic vesicle. GTPase that recruits MYO1E to MHC class II-containing vesicles via the effector protein ARL14EP and hence controls the movement of these vesicles along the actin cytoskeleton in dendritic cells. In Homo sapiens (Human), this protein is ADP-ribosylation factor-like protein 14 (ARL14).